Reading from the N-terminus, the 183-residue chain is Apo-citrate lyase phosphoribosyl-dephospho-CoA transferase (183 aa).

Belongs to the CitX family.

It catalyses the reaction apo-[citrate lyase ACP] + 2'-(5''-triphospho-alpha-D-ribosyl)-3'-dephospho-CoA = holo-[citrate lyase ACP] + diphosphate. Transfers 2-(5''-triphosphoribosyl)-3'-dephosphocoenzyme-A on a serine residue to the apo-acyl carrier protein (gamma chain) of the citrate lyase to yield holo-acyl carrier protein. The sequence is that of Apo-citrate lyase phosphoribosyl-dephospho-CoA transferase from Citrobacter koseri (strain ATCC BAA-895 / CDC 4225-83 / SGSC4696).